Here is a 607-residue protein sequence, read N- to C-terminus: MCGIIGIIGREDLSERLFQGLRRLEYRGYDSAGMCTIHDGKLDRRRAEGKLDNLGRVLANDPLPGKIGIAHTRWATHGAPTVANAHPHIAGDVAVVHNGIIENFKTLRDELLERGHHFESETDTEVVAHLLDEQMQAGKDPRHAVSKVLKKLRGAFALAILFKNYPDLLIGARLGSPLVVGYGDGENYLGSDALALAPLTQKISYLEEGDWVVLTREGIEVHDIEDRIVERPVVLSGASGLMVEKGNYRHFMQKEIFEQPVVVAQTLQSYLRPVEGQVALPDPDFDLSQIKRVTIVACGTSYYAGMVARYWIERFARVPVEIEAASEYRYREPVMEEGGLSLFISQSGETADTLAALRHARAGGQKIAVVVNVPTSSMAREADLLLPTHAGPEIGVASTKAFTCQLAVLAALATHIARVKGQLTQQEEQDIVRHLAEAPAALNAALAFNDTIENVATAIAPARDVLYIGRGPDYPLAMEGALKLKEISYIHAEGYAAGEMKHGPIALIDDKVPIIVLAPSGPLFEKTVSNMQEMQARGGKVILISDEKGIQEAGDNCLATLTMPKVHPLIAPIVYAIPVQLLAYHVAVIKGTDVDQPRNLAKSVTVE.

The Nucleophile; for GATase activity role is filled by cysteine 2. The 216-residue stretch at 2–217 folds into the Glutamine amidotransferase type-2 domain; sequence CGIIGIIGRE…EGDWVVLTRE (216 aa). SIS domains follow at residues 283-422 and 455-597; these read PDFD…VKGQ and VATA…VDQP. Lysine 602 acts as the For Fru-6P isomerization activity in catalysis.

As to quaternary structure, homodimer.

It is found in the cytoplasm. It carries out the reaction D-fructose 6-phosphate + L-glutamine = D-glucosamine 6-phosphate + L-glutamate. Functionally, catalyzes the first step in hexosamine metabolism, converting fructose-6P into glucosamine-6P using glutamine as a nitrogen source. This chain is Glutamine--fructose-6-phosphate aminotransferase [isomerizing], found in Zymomonas mobilis subsp. mobilis (strain ATCC 31821 / ZM4 / CP4).